The primary structure comprises 312 residues: Apolipoprotein E (312 aa).

Positions 1-18 are cleaved as a signal peptide; sequence MKALWAVLLVTLLAGCLA. A run of 8 repeats spans residues 72–93, 94–115, 116–137, 138–159, 160–181, 182–203, 204–225, and 226–247. The 8 X 22 AA approximate tandem repeats stretch occupies residues 72–247; the sequence is VLMEDTMTEV…RLEEVREHME (176 aa). Residue methionine 135 is modified to Methionine sulfoxide. Phosphoserine is present on serine 139. Positions 150-160 are LDL and other lipoprotein receptors binding; sequence HLRKMRKRLMR. Heparin is bound at residue 154-157; it reads MRKR. The segment at 202–282 is lipid-binding and lipoprotein association; sequence TANLGAGAAQ…GWFEPIVEDM (81 aa). Heparin is bound at residue 221–228; it reads GDRIRGRL. The segment at 258–312 is homooligomerization; it reads QQIRLQAEIFQARLKGWFEPIVEDMHRQWANLMEKIQASVATNPIISTPMPQENQ. The interval 270-282 is specificity for association with VLDL; it reads RLKGWFEPIVEDM.

This sequence belongs to the apolipoprotein A1/A4/E family. Homotetramer. May interact with ABCA1; functionally associated with ABCA1 in the biogenesis of HDLs. May interact with APP/A4 amyloid-beta peptide; the interaction is extremely stable in vitro but its physiological significance is unclear. May interact with MAPT. May interact with MAP2. In the cerebrospinal fluid, interacts with secreted SORL1. Interacts with PMEL; this allows the loading of PMEL luminal fragment on ILVs to induce fibril nucleation. APOE exists as multiple glycosylated and sialylated glycoforms within cells and in plasma. The extent of glycosylation and sialylation are tissue and context specific. In terms of processing, glycated in plasma VLDL. Post-translationally, phosphorylated by FAM20C in the extracellular medium.

It localises to the secreted. The protein resides in the extracellular space. The protein localises to the extracellular matrix. Its subcellular location is the extracellular vesicle. It is found in the endosome. It localises to the multivesicular body. Its function is as follows. APOE is an apolipoprotein, a protein associating with lipid particles, that mainly functions in lipoprotein-mediated lipid transport between organs via the plasma and interstitial fluids. APOE is a core component of plasma lipoproteins and is involved in their production, conversion and clearance. Apolipoproteins are amphipathic molecules that interact both with lipids of the lipoprotein particle core and the aqueous environment of the plasma. As such, APOE associates with chylomicrons, chylomicron remnants, very low density lipoproteins (VLDL) and intermediate density lipoproteins (IDL) but shows a preferential binding to high-density lipoproteins (HDL). It also binds a wide range of cellular receptors including the LDL receptor/LDLR, the LDL receptor-related proteins LRP1, LRP2 and LRP8 and the very low-density lipoprotein receptor/VLDLR that mediate the cellular uptake of the APOE-containing lipoprotein particles. Finally, APOE also has a heparin-binding activity and binds heparan-sulfate proteoglycans on the surface of cells, a property that supports the capture and the receptor-mediated uptake of APOE-containing lipoproteins by cells. A main function of APOE is to mediate lipoprotein clearance through the uptake of chylomicrons, VLDLs, and HDLs by hepatocytes. APOE is also involved in the biosynthesis by the liver of VLDLs as well as their uptake by peripheral tissues ensuring the delivery of triglycerides and energy storage in muscle, heart and adipose tissues. By participating in the lipoprotein-mediated distribution of lipids among tissues, APOE plays a critical role in plasma and tissues lipid homeostasis. APOE is also involved in two steps of reverse cholesterol transport, the HDLs-mediated transport of cholesterol from peripheral tissues to the liver, and thereby plays an important role in cholesterol homeostasis. First, it is functionally associated with ABCA1 in the biogenesis of HDLs in tissues. Second, it is enriched in circulating HDLs and mediates their uptake by hepatocytes. APOE also plays an important role in lipid transport in the central nervous system, regulating neuron survival and sprouting. The sequence is that of Apolipoprotein E (Apoe) from Mus pahari (Gairdner's shrew-mouse).